A 176-amino-acid chain; its full sequence is NAD(P)H-quinone oxidoreductase subunit J (176 aa).

The protein belongs to the complex I 30 kDa subunit family. As to quaternary structure, NDH-1 can be composed of about 15 different subunits; different subcomplexes with different compositions have been identified which probably have different functions.

The protein localises to the cellular thylakoid membrane. The enzyme catalyses a plastoquinone + NADH + (n+1) H(+)(in) = a plastoquinol + NAD(+) + n H(+)(out). It catalyses the reaction a plastoquinone + NADPH + (n+1) H(+)(in) = a plastoquinol + NADP(+) + n H(+)(out). Its function is as follows. NDH-1 shuttles electrons from an unknown electron donor, via FMN and iron-sulfur (Fe-S) centers, to quinones in the respiratory and/or the photosynthetic chain. The immediate electron acceptor for the enzyme in this species is believed to be plastoquinone. Couples the redox reaction to proton translocation, and thus conserves the redox energy in a proton gradient. Cyanobacterial NDH-1 also plays a role in inorganic carbon-concentration. This chain is NAD(P)H-quinone oxidoreductase subunit J, found in Nostoc punctiforme (strain ATCC 29133 / PCC 73102).